A 394-amino-acid polypeptide reads, in one-letter code: Ribulose bisphosphate carboxylase large chain (394 aa).

Lys-5 carries the N6,N6,N6-trimethyllysine modification. Substrate-binding residues include Asn-114 and Thr-164. Lys-166 acts as the Proton acceptor in catalysis. Lys-168 lines the substrate pocket. Mg(2+)-binding residues include Lys-192, Asp-194, and Glu-195. An N6-carboxylysine modification is found at Lys-192. His-285 functions as the Proton acceptor in the catalytic mechanism. The substrate site is built by Arg-286, His-318, and Ser-370.

The protein belongs to the RuBisCO large chain family. Type I subfamily. As to quaternary structure, heterohexadecamer of 8 large chains and 8 small chains; disulfide-linked. The disulfide link is formed within the large subunit homodimers. Mg(2+) is required as a cofactor. In terms of processing, the disulfide bond which can form in the large chain dimeric partners within the hexadecamer appears to be associated with oxidative stress and protein turnover.

It is found in the plastid. The protein localises to the chloroplast. It catalyses the reaction 2 (2R)-3-phosphoglycerate + 2 H(+) = D-ribulose 1,5-bisphosphate + CO2 + H2O. It carries out the reaction D-ribulose 1,5-bisphosphate + O2 = 2-phosphoglycolate + (2R)-3-phosphoglycerate + 2 H(+). RuBisCO catalyzes two reactions: the carboxylation of D-ribulose 1,5-bisphosphate, the primary event in carbon dioxide fixation, as well as the oxidative fragmentation of the pentose substrate in the photorespiration process. Both reactions occur simultaneously and in competition at the same active site. The sequence is that of Ribulose bisphosphate carboxylase large chain (rbcL) from Nelumbo lutea (American lotus).